Reading from the N-terminus, the 374-residue chain is MKGSEEAYLVSDKATKMYSLTKDSEKNHPSKPPLQDEENPQSKYHCHNNNKKAYDARQREQTFAKKKLCIASLICFVFISAEIVGGYIAGSLAVVTDAAHLLVDLSSFFISLCSLWLSSKSSTTRLTFGWHRAEILGALMSVITIWLVTGVLVYLACERLIRPDYTIDGTVMLITSACALGANLVLALILHQSGHGHSHAGGKHEHMASEYKPQTNASIRAAFIHVIGDLFQSISVLISALIIYFKPEYKMADPICTFIFSIFVLITTVTVLRDLLTVLMEGTPRGIHYSDVKQSILAVDGVKSVHSLHLWALTMNQVILSAHIATDIVGESKRILKDVTQNVFARFPFHSVTIQVEPIEDQSPECMFCYEPTQ.

The Cytoplasmic segment spans residues 1–67 (MKGSEEAYLV…QREQTFAKKK (67 aa)). A disordered region spans residues 18–48 (YSLTKDSEKNHPSKPPLQDEENPQSKYHCHN). Residues H45, C46, and H47 each coordinate Zn(2+). Residues 45 to 47 (HCH) carry the HCH Motif; seals regulatory zinc-binding pocket motif. Residues 68–88 (LCIASLICFVFISAEIVGGYI) traverse the membrane as a helical segment. Residues 89–91 (AGS) lie on the Lumenal, vesicle side of the membrane. Residues 92–112 (LAVVTDAAHLLVDLSSFFISL) traverse the membrane as a helical segment. Positions 100, 104, and 131 each coordinate Zn(2+). The Cytoplasmic segment spans residues 113 to 134 (CSLWLSSKSSTTRLTFGWHRAE). The chain crosses the membrane as a helical span at residues 135 to 155 (ILGALMSVITIWLVTGVLVYL). Residues 156–169 (ACERLIRPDYTIDG) lie on the Lumenal, vesicle side of the membrane. A helical membrane pass occupies residues 170–190 (TVMLITSACALGANLVLALIL). Topologically, residues 191-222 (HQSGHGHSHAGGKHEHMASEYKPQTNASIRAA) are cytoplasmic. The chain crosses the membrane as a helical span at residues 223–243 (FIHVIGDLFQSISVLISALII). Positions 225 and 229 each coordinate Zn(2+). Residues 244 to 251 (YFKPEYKM) lie on the Lumenal, vesicle side of the membrane. The chain crosses the membrane as a helical span at residues 252-272 (ADPICTFIFSIFVLITTVTVL). The Cytoplasmic portion of the chain corresponds to 273-374 (RDLLTVLMEG…ECMFCYEPTQ (102 aa)). Zn(2+) is bound by residues H306, H323, H350, E357, C366, and C369.

This sequence belongs to the cation diffusion facilitator (CDF) transporter (TC 2.A.4) family. SLC30A subfamily. Homodimer.

The protein resides in the cytoplasmic vesicle. It is found in the secretory vesicle membrane. Its subcellular location is the cell membrane. The catalysed reaction is Zn(2+)(in) + 2 H(+)(out) = Zn(2+)(out) + 2 H(+)(in). Its function is as follows. Proton-coupled zinc ion antiporter mediating the entry of zinc into the lumen of pancreatic beta cell secretory granules, thereby regulating insulin secretion. In Xenopus tropicalis (Western clawed frog), this protein is Proton-coupled zinc antiporter SLC30A8 (slc30a8).